A 95-amino-acid chain; its full sequence is Selenoprotein K (95 aa).

Residues 20 to 42 (LSFLTDMFWGITDFIVMFFQSII) traverse the membrane as a helical segment. Residues 48–95 (RRGCQNSSSRTRFDDGRGPPGNPRRRMGRIDHNSGPNAPPMSGGGUGR) are disordered. Residue Sec-93 is a non-standard amino acid, selenocysteine.

The protein belongs to the selenoprotein K family.

The protein localises to the endoplasmic reticulum membrane. The protein resides in the cell membrane. In terms of biological role, required for Ca(2+) flux in immune cells and plays a role in T-cell proliferation and in T-cell and neutrophil migration. Involved in endoplasmic reticulum-associated degradation (ERAD) of soluble glycosylated proteins. Required for cell surface expression of CD36 and involved in macrophage uptake of low-density lipoprotein and in foam cell formation. Required for palmitoylation. The polypeptide is Selenoprotein K (selenok) (Xenopus tropicalis (Western clawed frog)).